Consider the following 565-residue polypeptide: Proline--tRNA ligase (565 aa).

It belongs to the class-II aminoacyl-tRNA synthetase family. ProS type 1 subfamily. In terms of assembly, homodimer.

The protein localises to the cytoplasm. It catalyses the reaction tRNA(Pro) + L-proline + ATP = L-prolyl-tRNA(Pro) + AMP + diphosphate. Functionally, catalyzes the attachment of proline to tRNA(Pro) in a two-step reaction: proline is first activated by ATP to form Pro-AMP and then transferred to the acceptor end of tRNA(Pro). As ProRS can inadvertently accommodate and process non-cognate amino acids such as alanine and cysteine, to avoid such errors it has two additional distinct editing activities against alanine. One activity is designated as 'pretransfer' editing and involves the tRNA(Pro)-independent hydrolysis of activated Ala-AMP. The other activity is designated 'posttransfer' editing and involves deacylation of mischarged Ala-tRNA(Pro). The misacylated Cys-tRNA(Pro) is not edited by ProRS. In Lactobacillus helveticus (strain DPC 4571), this protein is Proline--tRNA ligase.